A 355-amino-acid polypeptide reads, in one-letter code: MLASKLDPFLKRFEELNSLLSSSDIINDISKMTTLSKEQKNLEPIVLKAKEYLKTLDNIEENKALLNDPELGELAKEELKTLEELKPKLEEEIKILLLPKDPNDERNIFLEIRAGAGGDEASLFVGDLVKAYARYAENRGYKLEIVSSSEGSVGGFKEIIMLVKGTGAYSRLKYEGGTHRVQRVPQTESQGRVHTSAITVAVMPEVDDIEIEINPNDLKVDVMRSSGHGGQSVNTTDSAVRITHIPTGIVVVNQDGKSQHKNKESAMKVLKARLYEMQESERLAKESEARKSQVGSGDRSERIRTYNFPQNRISDHRINLTLYRLDAIMQDGLFDEIIEPLITHHQAQALQEQNL.

The residue at position 231 (glutamine 231) is an N5-methylglutamine. Residues serine 280 to lysine 291 show a composition bias toward basic and acidic residues. The segment at serine 280–isoleucine 303 is disordered.

This sequence belongs to the prokaryotic/mitochondrial release factor family. Post-translationally, methylated by PrmC. Methylation increases the termination efficiency of RF1.

The protein localises to the cytoplasm. Its function is as follows. Peptide chain release factor 1 directs the termination of translation in response to the peptide chain termination codons UAG and UAA. In Campylobacter jejuni (strain RM1221), this protein is Peptide chain release factor 1.